The sequence spans 1459 residues: MAEEQQQPPPQQLDAPQQLPLSAPNPGVALPALVPGLPGTEANALQHKIKNSICKTVQSKVDCILQEVEKFTDLEKLYLYLQLPSGLSSAEKSDQNAMSSSRAQQMHAFSWIRNTLEEHPETSLPKQEVYDEYKSYCDNLGYHPLSAADFGKIMKNVFPNMKARRLGTRGKSKYCYSGLRKKAFVHMPTLPNLDFHKTGDGLEGVEPSGQLQNIDEEVISSACRLVCEWAQKVLSQPFDTVLELAHFLVKSHYIGTKSMAALTVMAAAPAGLKGIPQPSAFIPTAESNSFQPQVKTLPSPIDAKQQLQRKIQKKQQEQKLQSPLPGESSAKKPEGTTANGVANLPNGNPAILSPQPIGIVVAAVPSPIPVQRTRQLVTSPSPMNSPDGKVLPLNVQVVTQHMQSVKQTPKTPQNVPASPGGDRSARHRYPQILPKPANTSALTIRSPTTVLFTSSPIKTAVVPASHMSSLNVVKMTTISLTPSNSNAPLKHSASVSSATGTTEESRIVPQIKNGSVVSLQSPGSRASSTGGTSAVEVKMEPEGSSDEHPLQCQENSEETKAPLTTSSALWGQKSNTDGTVPKPSNEGVTEVKTTKVCDQRTKCKNRCNEILSGISAGNNQSTVTLSVATQNLPFTSTSSPSNGDSVNKDPKICTKSPRKRLSATLQESQVPPVKKPIVEQLSAVTIEGQKPGTVKKDQKVPHSGKTESSTAGAQIPNKVSISVSSQIIEDQPVNPALVTSEPVLEQQTTPSSSPDVKVKLEGSVFLLDRESKSDGSFNRNEWQQVTKDSDFIAASCEHQQDISVMTIAEHPDIHDLEKSVWELEGMPQDTYSQQLHSQIPESSLNEIQAQSSDQLPLQSELKEFESSVSQTNESYFPFDDELTQDSIVEELVLMEQQMSMNNSHSYGNCLGMSLQNQSVTPGAPMSSHASSTHFYHPIHSNGTPIHTPTPTPTPTPTPTPTPTPTSEMIAGSQSLSRESPCSRLAQTTPVDSALGSSRHTPIGTPHSNCSSSVPPSPVECRNPFAFTPISSSMAYHDASIVSSSPVKPMQRPMATHPDKTKLEWMNNGYGGVGNSSVSGHGILPSYQELVEDRFRKPHAFAVPGQSYQSQSRHHDTHFGRLTPVSPVQHQGATVNTNKQEGFAVPAPLDNKGTNSSAGSNFRCRSVSPAVHRQRNLSGSTLYPVSNIPRSNVTPFGSPVTPEVHVFTNVHTDACANNIAQRSQSVPLTVMMQTAFPNALQKQTNSKKITNVLLSKLDSDNDDSVRGLGINNVPSNYTARMNLTQILETSPVFPSANSQNMIDSSTSVYEFQTPSYLTKSNSTDQISFSPGDNQAQSEIGEQQLDFNSTVKDLLSGDNLQTSQQLVGQVASDLTNTASDFSSDIRLSSDLSGSINDLNTLDPNLLFDPGRQQGQDDEATLEELKNDPLFQQICSESMNSMTSSGFEWIESKDHPTVEMLG.

A disordered region spans residues 1 to 27; it reads MAEEQQQPPPQQLDAPQQLPLSAPNPG. Residues 12–21 show a composition bias toward low complexity; it reads QLDAPQQLPL. Residues 108 to 183 constitute a DNA-binding region (RFX-type winged-helix); it reads AFSWIRNTLE…YCYSGLRKKA (76 aa). The PxLPxI/L motif; mediates interaction with ANKRA2 and RFXANK signature appears at 188 to 193; sequence PTLPNL. Disordered regions lie at residues 303–347, 404–428, 482–590, 634–659, 688–716, and 918–1016; these read AKQQ…LPNG, SVKQ…ARHR, PSNS…GVTE, FTST…SPRK, GQKP…AQIP, and SVTP…VPPS. Composition is skewed to polar residues over residues 404 to 416 and 482 to 502; these read SVKQ…QNVP and PSNS…TGTT. A compositionally biased stretch (low complexity) spans 521–534; sequence SPGSRASSTGGTSA. Residues 537–549 show a composition bias toward basic and acidic residues; that stretch reads VKMEPEGSSDEHP. Composition is skewed to polar residues over residues 562–578, 634–645, and 706–716; these read PLTT…NTDG, FTSTSSPSNGDS, and TESSTAGAQIP. Positions 947–963 are enriched in pro residues; it reads TPTPTPTPTPTPTPTPT. Positions 971-1009 are enriched in polar residues; the sequence is GSQSLSRESPCSRLAQTTPVDSALGSSRHTPIGTPHSNC.

It belongs to the RFX family. In terms of assembly, interacts (via PxLPxI/L motif) with RFXANK (via ankyrin repeats). Interacts (via PxLPxI/L motif) with ANKRA2 (via ankyrin repeats). As to expression, expressed in spleen and lymph node and to a lower extend in brain (at protein level). Expressed in lymphoid organs and lymphoid cell subsets. Expressed throughout natural killer (NK) cell maturation.

The protein localises to the nucleus. Its function is as follows. Transcription factor. Acts as a transcriptional activator by binding to promoter regions of target genes, such as Rec8, Mxd4 and Ddit4. Plays a role in natural killer (NK) cell maintenance and immunity. May play a role in the process of ciliogenesis in the neural tube and neural tube closure. This Mus musculus (Mouse) protein is DNA-binding protein RFX7.